The primary structure comprises 274 residues: MAVIKIKPTSPGQRGTVKISRDHLYKGEAFAGLLEPQFQKAGRNNNGHITTRHKGGGHKHHYRVVDFRRNKDAIPAKVERIEYDPNRTAHIALVCYADGERRYIIAPRNLEVGATIVSGSEAPIRVGNTLPIRNIPVGSTIHCIELKPGAGAQIARSAGTSATLLAREGVYAQVRMRSGEVRKIHIECRATIGEVANEEHSLRQLGKAGVKRWMGIRPTVRGVAMNPIDHPHGGGEGRTGEGRHAVDPWGNLTKGYRTRNNKRTQVMIVSRRKK.

The segment at 224–256 (AMNPIDHPHGGGEGRTGEGRHAVDPWGNLTKGY) is disordered. A compositionally biased stretch (basic and acidic residues) spans 229 to 246 (DHPHGGGEGRTGEGRHAV).

Belongs to the universal ribosomal protein uL2 family. As to quaternary structure, part of the 50S ribosomal subunit. Forms a bridge to the 30S subunit in the 70S ribosome.

In terms of biological role, one of the primary rRNA binding proteins. Required for association of the 30S and 50S subunits to form the 70S ribosome, for tRNA binding and peptide bond formation. It has been suggested to have peptidyltransferase activity; this is somewhat controversial. Makes several contacts with the 16S rRNA in the 70S ribosome. The protein is Large ribosomal subunit protein uL2 of Acidovorax ebreus (strain TPSY) (Diaphorobacter sp. (strain TPSY)).